The following is a 98-amino-acid chain: Small ribosomal subunit protein uS19 (98 aa).

2 disordered regions span residues 1 to 30 and 78 to 98; these read MARS…KKSV and RTFH…PAKK. Residues 9-24 show a composition bias toward basic and acidic residues; it reads PFADKHLTKKVEDANK.

It belongs to the universal ribosomal protein uS19 family.

Functionally, protein S19 forms a complex with S13 that binds strongly to the 16S ribosomal RNA. This chain is Small ribosomal subunit protein uS19, found in Anaeromyxobacter dehalogenans (strain 2CP-C).